We begin with the raw amino-acid sequence, 223 residues long: 7-cyano-7-deazaguanine synthase (223 aa).

Residue 10-20 (FSGGQDSTTCL) coordinates ATP. C188, C197, C200, and C203 together coordinate Zn(2+).

Belongs to the QueC family. Zn(2+) serves as cofactor.

The enzyme catalyses 7-carboxy-7-deazaguanine + NH4(+) + ATP = 7-cyano-7-deazaguanine + ADP + phosphate + H2O + H(+). Its pathway is purine metabolism; 7-cyano-7-deazaguanine biosynthesis. Catalyzes the ATP-dependent conversion of 7-carboxy-7-deazaguanine (CDG) to 7-cyano-7-deazaguanine (preQ(0)). This chain is 7-cyano-7-deazaguanine synthase, found in Phocaeicola vulgatus (strain ATCC 8482 / DSM 1447 / JCM 5826 / CCUG 4940 / NBRC 14291 / NCTC 11154) (Bacteroides vulgatus).